We begin with the raw amino-acid sequence, 326 residues long: Putative cell agglutination protein pfl9 (326 aa).

A signal peptide spans 1 to 21 (MNVVKYIIFSFALAPLLLVNA). A glycan (N-linked (GlcNAc...) asparagine) is linked at Asn-25. 2 repeat units span residues 103–137 (STIT…IPTA) and 138–175 (GTFT…TPSC). Residues 103-175 (STITTTITSG…GEVEVITPSC (73 aa)) are 2 X 36 AA approximate tandem repeats. In terms of domain architecture, DIPSY spans 164–326 (QSGEVEVITP…RANDVTLQLY (163 aa)).

Belongs to the mam3/map4 family.

It is found in the cell surface. Functionally, may be involved in agglutination during conjugation or other aspects of colony formation. Induces flocculation when overexpressed. This is Putative cell agglutination protein pfl9 from Schizosaccharomyces pombe (strain 972 / ATCC 24843) (Fission yeast).